The following is a 326-amino-acid chain: Pyruvate dehydrogenase E1 component subunit beta (326 aa).

Thiamine diphosphate is bound at residue Glu59.

Heterodimer of an alpha and a beta chain. Requires thiamine diphosphate as cofactor.

It catalyses the reaction N(6)-[(R)-lipoyl]-L-lysyl-[protein] + pyruvate + H(+) = N(6)-[(R)-S(8)-acetyldihydrolipoyl]-L-lysyl-[protein] + CO2. Its function is as follows. The pyruvate dehydrogenase complex catalyzes the overall conversion of pyruvate to acetyl-CoA and CO(2). It contains multiple copies of three enzymatic components: pyruvate dehydrogenase (E1), dihydrolipoamide acetyltransferase (E2) and lipoamide dehydrogenase (E3). In Rickettsia conorii (strain ATCC VR-613 / Malish 7), this protein is Pyruvate dehydrogenase E1 component subunit beta (pdhB).